Consider the following 535-residue polypeptide: Aklavinone 12-hydroxylase RdmE (535 aa).

The FAD site is built by L15, G16, E35, Q119, and L143. Y224 serves as the catalytic Proton acceptor. Position 308 (D308) interacts with FAD. Position 317 (G317) interacts with aklavinone.

It belongs to the PheA/TfdB FAD monooxygenase family. As to quaternary structure, monomer. Requires FAD as cofactor.

It carries out the reaction aklavinone + NADPH + O2 + H(+) = epsilon-rhodomycinone + NADP(+) + H2O. The protein operates within antibiotic biosynthesis; daunorubicin biosynthesis. It participates in antibiotic biosynthesis; carminomycin biosynthesis. It functions in the pathway antibiotic biosynthesis; rhodomycin biosynthesis. With respect to regulation, inhibited by phenylglyoxal and 2,3-butanedione. NADP provides a partial protection against inhibition by phenylglyoxal. Increasing the methanol concentration in the assay causes inhibition of the enzyme. Involved in the biosynthesis of the anthracyclines carminomycin, rhodomycin and daunorubicin (daunomycin) which are aromatic polyketide antibiotics that exhibit high cytotoxicity and are widely applied in the chemotherapy of a variety of cancers. Catalyzes the incorporation of a hydroxyl group at position C-11 of aklavinone, resulting in epsilon-rhodomycinone. It cannot accept substrates glycosylated at position C-7 and is specific for the C-9R configuration of anthracyclines. It can use both NAD or NADP but it is slowly inactivated in the presence of NADH. In Streptomyces purpurascens, this protein is Aklavinone 12-hydroxylase RdmE (rdmE).